The sequence spans 359 residues: Putative mannose-1-phosphate guanyltransferase (359 aa).

Belongs to the transferase hexapeptide repeat family.

It carries out the reaction alpha-D-mannose 1-phosphate + GTP + H(+) = GDP-alpha-D-mannose + diphosphate. The chain is Putative mannose-1-phosphate guanyltransferase (mpg1) from Sulfolobus acidocaldarius (strain ATCC 33909 / DSM 639 / JCM 8929 / NBRC 15157 / NCIMB 11770).